The sequence spans 306 residues: Dihydroorotate dehydrogenase B (NAD(+)), catalytic subunit (306 aa).

FMN-binding positions include serine 22 and 46–47 (KT). Residues lysine 46, 70 to 74 (NSIGL), and asparagine 128 each bind substrate. An FMN-binding site is contributed by asparagine 128. Residue cysteine 131 is the Nucleophile of the active site. Lysine 164 lines the FMN pocket. Position 191-192 (191-192 (NT)) interacts with substrate. FMN-binding positions include glycine 216, 242–243 (GG), and 264–265 (GS).

This sequence belongs to the dihydroorotate dehydrogenase family. Type 1 subfamily. As to quaternary structure, heterotetramer of 2 PyrK and 2 PyrD type B subunits. The cofactor is FMN.

It localises to the cytoplasm. It catalyses the reaction (S)-dihydroorotate + NAD(+) = orotate + NADH + H(+). It functions in the pathway pyrimidine metabolism; UMP biosynthesis via de novo pathway; orotate from (S)-dihydroorotate (NAD(+) route): step 1/1. Its function is as follows. Catalyzes the conversion of dihydroorotate to orotate with NAD(+) as electron acceptor. The chain is Dihydroorotate dehydrogenase B (NAD(+)), catalytic subunit (pyrD) from Endomicrobium trichonymphae.